Here is a 223-residue protein sequence, read N- to C-terminus: Probable Brix domain-containing ribosomal biogenesis protein (223 aa).

The Brix domain occupies 1 to 196; that stretch reads MMLITTSHRP…IWIMEDGRRW (196 aa).

Functionally, probably involved in the biogenesis of the ribosome. In Pyrococcus furiosus (strain ATCC 43587 / DSM 3638 / JCM 8422 / Vc1), this protein is Probable Brix domain-containing ribosomal biogenesis protein.